A 34-amino-acid chain; its full sequence is Calcitonin-like peptide 1 (34 aa).

A disulfide bridge connects residues C2 and C7. The residue at position 34 (P34) is a Proline amide.

This chain is Calcitonin-like peptide 1, found in Odorrana schmackeri (Schmacker's frog).